A 138-amino-acid chain; its full sequence is Large ribosomal subunit protein uL16 (138 aa).

A compositionally biased stretch (basic residues) spans 1-15; that stretch reads MLSPRKVKYRKKQRG. The tract at residues 1 to 20 is disordered; sequence MLSPRKVKYRKKQRGRLSGE.

It belongs to the universal ribosomal protein uL16 family. Part of the 50S ribosomal subunit.

In terms of biological role, binds 23S rRNA and is also seen to make contacts with the A and possibly P site tRNAs. The sequence is that of Large ribosomal subunit protein uL16 from Borrelia turicatae (strain 91E135).